Reading from the N-terminus, the 28-residue chain is Humanin-like 2 (28 aa).

The protein belongs to the humanin family. As to expression, highly expressed in testis. Also expressed in kidney, heart, skeletal muscles and brain.

It localises to the secreted. The protein resides in the cytoplasm. In terms of biological role, plays a role as a neuroprotective and antiapoptotic factor. The polypeptide is Humanin-like 2 (Homo sapiens (Human)).